The primary structure comprises 670 residues: Beta-lactam-inducible penicillin-binding protein (670 aa).

The helical transmembrane segment at I4–A24 threads the bilayer. A penicillin is bound by residues S25 and S405. S405 (acyl-ester intermediate) is an active-site residue.

Belongs to the transpeptidase family.

The protein resides in the cell membrane. This chain is Beta-lactam-inducible penicillin-binding protein (pbp), found in Staphylococcus aureus.